Reading from the N-terminus, the 202-residue chain is Large ribosomal subunit protein bL25 (202 aa).

Belongs to the bacterial ribosomal protein bL25 family. CTC subfamily. Part of the 50S ribosomal subunit; part of the 5S rRNA/L5/L18/L25 subcomplex. Contacts the 5S rRNA. Binds to the 5S rRNA independently of L5 and L18.

Its function is as follows. This is one of the proteins that binds to the 5S RNA in the ribosome where it forms part of the central protuberance. The polypeptide is Large ribosomal subunit protein bL25 (Methylococcus capsulatus (strain ATCC 33009 / NCIMB 11132 / Bath)).